The primary structure comprises 267 residues: tRNA pseudouridine synthase A (267 aa).

Catalysis depends on D55, which acts as the Nucleophile. Y111 lines the substrate pocket.

The protein belongs to the tRNA pseudouridine synthase TruA family.

The catalysed reaction is uridine(38/39/40) in tRNA = pseudouridine(38/39/40) in tRNA. Formation of pseudouridine at positions 38, 39 and 40 in the anticodon stem and loop of transfer RNAs. This is tRNA pseudouridine synthase A from Thermococcus kodakarensis (strain ATCC BAA-918 / JCM 12380 / KOD1) (Pyrococcus kodakaraensis (strain KOD1)).